The following is a 31-amino-acid chain: Protamine-Z (31 aa).

Positions 1–31 (ARRRRSRRASRPVRRRRPRRVSRRRRARRRR) are disordered.

In terms of tissue distribution, testis.

It localises to the nucleus. The protein resides in the chromosome. Its function is as follows. Protamines substitute for histones in the chromatin of sperm during the haploid phase of spermatogenesis. They compact sperm DNA into a highly condensed, stable and inactive complex. The protein is Protamine-Z of Clupea harengus (Atlantic herring).